We begin with the raw amino-acid sequence, 99 residues long: Large ribosomal subunit protein bL21 (99 aa).

It belongs to the bacterial ribosomal protein bL21 family. Part of the 50S ribosomal subunit. Contacts protein L20.

Functionally, this protein binds to 23S rRNA in the presence of protein L20. In Acholeplasma laidlawii (strain PG-8A), this protein is Large ribosomal subunit protein bL21.